We begin with the raw amino-acid sequence, 126 residues long: uncharacterized protein (126 aa).

A helical membrane pass occupies residues 3–23 (NMIVLIIFAAFIIYMIASYVY). In terms of domain architecture, Rhodanese spans 39–123 (GYRKAQLIDV…GFKKWGGKIK (85 aa)).

The protein localises to the cell membrane. This is an uncharacterized protein from Bacillus subtilis (strain 168).